The sequence spans 264 residues: Small ribosomal subunit protein uS3 (264 aa).

In terms of domain architecture, KH type-2 spans 39–107 (VREYLKKKLK…PVHVNIEEIR (69 aa)). The interval 214–264 (PVETAAPREEERRPRRAPRGDRPDGARNGRPGGGRGRAPRKADAAPAPEGE) is disordered. Positions 219–240 (APREEERRPRRAPRGDRPDGAR) are enriched in basic and acidic residues.

Belongs to the universal ribosomal protein uS3 family. In terms of assembly, part of the 30S ribosomal subunit. Forms a tight complex with proteins S10 and S14.

Binds the lower part of the 30S subunit head. Binds mRNA in the 70S ribosome, positioning it for translation. The polypeptide is Small ribosomal subunit protein uS3 (Bordetella avium (strain 197N)).